Consider the following 396-residue polypeptide: Elongation factor Tu (396 aa).

One can recognise a tr-type G domain in the interval 10-205; sequence KPHVNIGTIG…AVDESIPDPV (196 aa). A G1 region spans residues 19-26; the sequence is GHVDHGKT. GTP is bound at residue 19-26; sequence GHVDHGKT. Thr-26 lines the Mg(2+) pocket. Residues 62-66 form a G2 region; that stretch reads GITIN. The G3 stretch occupies residues 83–86; sequence DAPG. Residues 83-87 and 138-141 contribute to the GTP site; these read DAPGH and NKAD. A G4 region spans residues 138–141; the sequence is NKAD. The segment at 175–177 is G5; the sequence is SAL.

This sequence belongs to the TRAFAC class translation factor GTPase superfamily. Classic translation factor GTPase family. EF-Tu/EF-1A subfamily. Monomer.

It localises to the cytoplasm. The catalysed reaction is GTP + H2O = GDP + phosphate + H(+). Functionally, GTP hydrolase that promotes the GTP-dependent binding of aminoacyl-tRNA to the A-site of ribosomes during protein biosynthesis. This Rhodococcus erythropolis (strain PR4 / NBRC 100887) protein is Elongation factor Tu.